A 649-amino-acid polypeptide reads, in one-letter code: Acetyl-coenzyme A synthetase (649 aa).

CoA-binding positions include 191 to 194, Thr309, and Asn333; that span reads RGGR. ATP-binding positions include 385 to 387, 409 to 414, Asp498, and Arg513; these read GEP and DTWWQT. Ser521 contacts CoA. Arg524 contributes to the ATP binding site. Mg(2+) is bound by residues Val535, His537, and Val540. Arg582 contributes to the CoA binding site. Residue Lys607 is modified to N6-acetyllysine.

Belongs to the ATP-dependent AMP-binding enzyme family. It depends on Mg(2+) as a cofactor. In terms of processing, acetylated. Deacetylation by the SIR2-homolog deacetylase activates the enzyme.

The catalysed reaction is acetate + ATP + CoA = acetyl-CoA + AMP + diphosphate. Catalyzes the conversion of acetate into acetyl-CoA (AcCoA), an essential intermediate at the junction of anabolic and catabolic pathways. AcsA undergoes a two-step reaction. In the first half reaction, AcsA combines acetate with ATP to form acetyl-adenylate (AcAMP) intermediate. In the second half reaction, it can then transfer the acetyl group from AcAMP to the sulfhydryl group of CoA, forming the product AcCoA. The protein is Acetyl-coenzyme A synthetase of Novosphingobium aromaticivorans (strain ATCC 700278 / DSM 12444 / CCUG 56034 / CIP 105152 / NBRC 16084 / F199).